Consider the following 203-residue polypeptide: ATP-dependent Clp protease proteolytic subunit (203 aa).

The active-site Nucleophile is Ser-103. His-128 is an active-site residue.

Belongs to the peptidase S14 family. As to quaternary structure, fourteen ClpP subunits assemble into 2 heptameric rings which stack back to back to give a disk-like structure with a central cavity, resembling the structure of eukaryotic proteasomes.

It localises to the cytoplasm. The catalysed reaction is Hydrolysis of proteins to small peptides in the presence of ATP and magnesium. alpha-casein is the usual test substrate. In the absence of ATP, only oligopeptides shorter than five residues are hydrolyzed (such as succinyl-Leu-Tyr-|-NHMec, and Leu-Tyr-Leu-|-Tyr-Trp, in which cleavage of the -Tyr-|-Leu- and -Tyr-|-Trp bonds also occurs).. Cleaves peptides in various proteins in a process that requires ATP hydrolysis. Has a chymotrypsin-like activity. Plays a major role in the degradation of misfolded proteins. The polypeptide is ATP-dependent Clp protease proteolytic subunit (Nitrosococcus oceani (strain ATCC 19707 / BCRC 17464 / JCM 30415 / NCIMB 11848 / C-107)).